A 119-amino-acid polypeptide reads, in one-letter code: Protein yippee-like 3 (119 aa).

Residues 19-116 enclose the Yippee domain; the sequence is RRYSCVHCRA…IELSHMIKDN (98 aa). Residues C23, C26, C79, and C82 each coordinate Zn(2+).

The protein belongs to the yippee family.

The protein resides in the nucleus. The protein localises to the nucleolus. May be involved in proliferation and apoptosis in myeloid precursor cells. The sequence is that of Protein yippee-like 3 (ypel3) from Oryzias latipes (Japanese rice fish).